A 310-amino-acid polypeptide reads, in one-letter code: Apolipoprotein E (310 aa).

An N-terminal signal peptide occupies residues 1-18; the sequence is MKVLWAALVVTLLAGCQA. 4 tandem repeats follow at residues 77–98, 99–120, 121–142, and 143–164. Residues 77-248 are 8 X 22 AA approximate tandem repeats; sequence ALMEETMKEV…RLDEVREQVQ (172 aa). Methionine sulfoxide is present on Met-140. Ser-144 is subject to Phosphoserine. An LDL and other lipoprotein receptors binding region spans residues 155–165; that stretch reads HLRKLRKRLLR. 159 to 162 provides a ligand contact to heparin; it reads LRKR. The stretch at residues 165 to 186 is a repeat; the sequence is RDAEDLQKRLAVYQAGIREGAE. 3 tandem repeats follow at residues 187–204, 205–226, and 227–248. The lipid-binding and lipoprotein association stretch occupies residues 203-283; the sequence is AATVRSLISK…SWFEPLVQDM (81 aa). A heparin-binding site is contributed by 222 to 229; sequence GQRLRGRL. The interval 259–310 is homooligomerization; sequence NQMRLQAEAFHARLKSWFEPLVQDMQQKWAELVEKVQLAVGTSPTSESSEKQ. The specificity for association with VLDL stretch occupies residues 271-283; that stretch reads RLKSWFEPLVQDM.

This sequence belongs to the apolipoprotein A1/A4/E family. In terms of assembly, homotetramer. May interact with ABCA1; functionally associated with ABCA1 in the biogenesis of HDLs. May interact with APP/A4 amyloid-beta peptide; the interaction is extremely stable in vitro but its physiological significance is unclear. May interact with MAPT. May interact with MAP2. In the cerebrospinal fluid, interacts with secreted SORL1. Interacts with PMEL; this allows the loading of PMEL luminal fragment on ILVs to induce fibril nucleation. APOE exists as multiple glycosylated and sialylated glycoforms within cells and in plasma. The extent of glycosylation and sialylation are tissue and context specific. Post-translationally, glycated in plasma VLDL. In terms of processing, phosphorylated by FAM20C in the extracellular medium.

The protein localises to the secreted. The protein resides in the extracellular space. It localises to the extracellular matrix. It is found in the extracellular vesicle. Its subcellular location is the endosome. The protein localises to the multivesicular body. Functionally, APOE is an apolipoprotein, a protein associating with lipid particles, that mainly functions in lipoprotein-mediated lipid transport between organs via the plasma and interstitial fluids. APOE is a core component of plasma lipoproteins and is involved in their production, conversion and clearance. Apolipoproteins are amphipathic molecules that interact both with lipids of the lipoprotein particle core and the aqueous environment of the plasma. As such, APOE associates with chylomicrons, chylomicron remnants, very low density lipoproteins (VLDL) and intermediate density lipoproteins (IDL) but shows a preferential binding to high-density lipoproteins (HDL). It also binds a wide range of cellular receptors including the LDL receptor/LDLR, the LDL receptor-related proteins LRP1, LRP2 and LRP8 and the very low-density lipoprotein receptor/VLDLR that mediate the cellular uptake of the APOE-containing lipoprotein particles. Finally, APOE also has a heparin-binding activity and binds heparan-sulfate proteoglycans on the surface of cells, a property that supports the capture and the receptor-mediated uptake of APOE-containing lipoproteins by cells. A main function of APOE is to mediate lipoprotein clearance through the uptake of chylomicrons, VLDLs, and HDLs by hepatocytes. APOE is also involved in the biosynthesis by the liver of VLDLs as well as their uptake by peripheral tissues ensuring the delivery of triglycerides and energy storage in muscle, heart and adipose tissues. By participating in the lipoprotein-mediated distribution of lipids among tissues, APOE plays a critical role in plasma and tissues lipid homeostasis. APOE is also involved in two steps of reverse cholesterol transport, the HDLs-mediated transport of cholesterol from peripheral tissues to the liver, and thereby plays an important role in cholesterol homeostasis. First, it is functionally associated with ABCA1 in the biogenesis of HDLs in tissues. Second, it is enriched in circulating HDLs and mediates their uptake by hepatocytes. APOE also plays an important role in lipid transport in the central nervous system, regulating neuron survival and sprouting. The polypeptide is Apolipoprotein E (APOE) (Tapirus terrestris (Lowland tapir)).